A 22-amino-acid chain; its full sequence is QGCCNVPNGCSGRWCRDHAQCC.

Position 1 is a pyrrolidone carboxylic acid (Gln-1). Disulfide bonds link Cys-3–Cys-15, Cys-4–Cys-21, and Cys-10–Cys-22. Cys-22 carries the cysteine amide modification.

The protein belongs to the conotoxin M superfamily. Expressed by the venom duct.

The protein resides in the secreted. Its function is as follows. Mu-conotoxins block voltage-gated sodium channels (Nav). This synthetic toxin potently blocks rNav1.3/SCN3A. It also moderately blocks rNav1.1/SCN1A, rNav1.2/SCN2A, rNav1.4/SCN4A, mNav1.6/SCN8A, and Nav1.7/SCN9A. sodium channels. This block is very slowly reversible. This Conus magus (Magical cone) protein is Mu-conotoxin MIIIA.